The chain runs to 304 residues: Pyridoxal 5'-phosphate synthase subunit pyroA (304 aa).

Asp-28 contacts D-ribose 5-phosphate. The Schiff-base intermediate with D-ribose 5-phosphate role is filled by Lys-85. Gly-157 lines the D-ribose 5-phosphate pocket. Arg-169 is a D-glyceraldehyde 3-phosphate binding site. D-ribose 5-phosphate is bound by residues Gly-224 and 245 to 246 (GS).

Belongs to the PdxS/SNZ family.

The enzyme catalyses aldehydo-D-ribose 5-phosphate + D-glyceraldehyde 3-phosphate + L-glutamine = pyridoxal 5'-phosphate + L-glutamate + phosphate + 3 H2O + H(+). Its pathway is cofactor biosynthesis; pyridoxal 5'-phosphate biosynthesis. In terms of biological role, catalyzes the formation of pyridoxal 5'-phosphate from ribose 5-phosphate (RBP), glyceraldehyde 3-phosphate (G3P) and ammonia. The ammonia is provided by PDX2. Can also use ribulose 5-phosphate and dihydroxyacetone phosphate as substrates, resulting from enzyme-catalyzed isomerization of RBP and G3P, respectively. Also plays an indirect role in resistance to singlet oxygen-generating photosensitizers. This is Pyridoxal 5'-phosphate synthase subunit pyroA (pyroA) from Emericella nidulans (strain FGSC A4 / ATCC 38163 / CBS 112.46 / NRRL 194 / M139) (Aspergillus nidulans).